The following is a 117-amino-acid chain: Immunoglobulin heavy variable 1-46 (117 aa).

The N-terminal stretch at 1-19 (MDWTWRVFCLLAVAPGAHS) is a signal peptide. A framework-1 region spans residues 20–44 (QVQLVQSGAEVKKPGASVKVSCKAS). In terms of domain architecture, Ig-like spans 20–117 (QVQLVQSGAE…EDTAVYYCAR (98 aa)). The cysteines at positions 41 and 115 are disulfide-linked. The interval 45–52 (GYTFTSYY) is complementarity-determining-1. The interval 53–69 (MHWVRQAPGQGLEWMGI) is framework-2. Positions 70 to 77 (INPSGGST) are complementarity-determining-2. The interval 78–115 (SYAQKFQGRVTMTRDTSTSTVYMELSSLRSEDTAVYYC) is framework-3. The complementarity-determining-3 stretch occupies residues 116-117 (AR).

In terms of assembly, immunoglobulins are composed of two identical heavy chains and two identical light chains; disulfide-linked.

The protein localises to the secreted. The protein resides in the cell membrane. V region of the variable domain of immunoglobulin heavy chains that participates in the antigen recognition. Immunoglobulins, also known as antibodies, are membrane-bound or secreted glycoproteins produced by B lymphocytes. In the recognition phase of humoral immunity, the membrane-bound immunoglobulins serve as receptors which, upon binding of a specific antigen, trigger the clonal expansion and differentiation of B lymphocytes into immunoglobulins-secreting plasma cells. Secreted immunoglobulins mediate the effector phase of humoral immunity, which results in the elimination of bound antigens. The antigen binding site is formed by the variable domain of one heavy chain, together with that of its associated light chain. Thus, each immunoglobulin has two antigen binding sites with remarkable affinity for a particular antigen. The variable domains are assembled by a process called V-(D)-J rearrangement and can then be subjected to somatic hypermutations which, after exposure to antigen and selection, allow affinity maturation for a particular antigen. This Homo sapiens (Human) protein is Immunoglobulin heavy variable 1-46.